The chain runs to 207 residues: Guanylate kinase (207 aa).

Residues 6–185 (GLLIVLSGPS…AKNRIQCIVE (180 aa)) enclose the Guanylate kinase-like domain. An ATP-binding site is contributed by 13 to 20 (GPSGVGKG).

It belongs to the guanylate kinase family.

The protein localises to the cytoplasm. The catalysed reaction is GMP + ATP = GDP + ADP. In terms of biological role, essential for recycling GMP and indirectly, cGMP. In Staphylococcus aureus (strain Mu50 / ATCC 700699), this protein is Guanylate kinase.